The chain runs to 1025 residues: Beta-galactosidase (1025 aa).

Residues asparagine 103 and aspartate 202 each coordinate substrate. Residue aspartate 202 coordinates Na(+). Residues glutamate 417, histidine 419, and glutamate 462 each coordinate Mg(2+). Substrate is bound by residues glutamate 462 and 538-541; that span reads EYAH. The active-site Proton donor is glutamate 462. Glutamate 538 acts as the Nucleophile in catalysis. Position 598 (asparagine 598) interacts with Mg(2+). Na(+)-binding residues include phenylalanine 602 and asparagine 605. Substrate is bound by residues asparagine 605 and tryptophan 1003.

The protein belongs to the glycosyl hydrolase 2 family. Homotetramer. Mg(2+) serves as cofactor. Requires Na(+) as cofactor.

It catalyses the reaction Hydrolysis of terminal non-reducing beta-D-galactose residues in beta-D-galactosides.. The protein is Beta-galactosidase of Citrobacter koseri (strain ATCC BAA-895 / CDC 4225-83 / SGSC4696).